Reading from the N-terminus, the 163-residue chain is Regulator of chromosome segregation (163 aa).

As to quaternary structure, interacts with CpsD and ParB.

It is found in the cytoplasm. The protein resides in the nucleoid. The protein localises to the cell membrane. In terms of biological role, required for cell division and chromosome segregation. Binds to DNA and is involved in segregating the origin of replication (oriC) region to new daughter cells. When the nucleoid is not properly segregated, involved in blocking the cell division to protect the nucleoid against premature truncation by the newly forming septum, a function which is dependent on CpsD and its autophosphorylation level. The sequence is that of Regulator of chromosome segregation from Streptococcus pneumoniae serotype 2 (strain D39 / NCTC 7466).